Reading from the N-terminus, the 114-residue chain is Large ribosomal subunit protein bL17 (114 aa).

The protein belongs to the bacterial ribosomal protein bL17 family. Part of the 50S ribosomal subunit. Contacts protein L32.

This is Large ribosomal subunit protein bL17 from Halothermothrix orenii (strain H 168 / OCM 544 / DSM 9562).